We begin with the raw amino-acid sequence, 187 residues long: Interferon beta (187 aa).

The signal sequence occupies residues 1–21 (MTNKCLLQIALLLCFSTTALS). Tyrosine 24 is modified (phosphotyrosine). Cysteine 52 and cysteine 162 are joined by a disulfide. Residue asparagine 101 is glycosylated (N-linked (GlcNAc...) asparagine).

This sequence belongs to the alpha/beta interferon family. In terms of assembly, monomer.

The protein localises to the secreted. In terms of biological role, type I interferon cytokine that plays a key role in the innate immune response to infection, developing tumors and other inflammatory stimuli. Signals via binding to high-affinity (IFNAR2) and low-affinity (IFNAR1) heterodimeric receptor, activating the canonical Jak-STAT signaling pathway resulting in transcriptional activation or repression of interferon-regulated genes that encode the effectors of the interferon response, such as antiviral proteins, regulators of cell proliferation and differentiation, and immunoregulatory proteins. Signals mostly via binding to a IFNAR1-IFNAR2 heterodimeric receptor, but can also function with IFNAR1 alone and independently of Jak-STAT pathways. Elicits a wide variety of responses, including antiviral and antibacterial activities, and can regulate the development of B-cells, myelopoiesis and lipopolysaccharide (LPS)-inducible production of tumor necrosis factor. Plays a role in neuronal homeostasis by regulating dopamine turnover and protecting dopaminergic neurons: acts by promoting neuronal autophagy and alpha-synuclein clearance, thereby preventing dopaminergic neuron loss. IFNB1 is more potent than interferon-alpha (IFN-alpha) in inducing the apoptotic and antiproliferative pathways required for control of tumor cell growth. The chain is Interferon beta (IFNB1) from Macaca fascicularis (Crab-eating macaque).